The sequence spans 723 residues: Bifunctional lysine-specific demethylase and histidyl-hydroxylase NO66 (723 aa).

Disordered regions lie at residues 13-34 and 48-213; these read KKTA…QKAA and SAVK…APSC. Positions 14-31 are enriched in basic residues; that stretch reads KTAKKPAKKTTKQNRQKQ. Low complexity predominate over residues 49 to 72; the sequence is AVKQNNGAKGKAKANGVKGNAKAQ. Composition is skewed to acidic residues over residues 88 to 106 and 114 to 129; these read ESVD…EDNE and EDDY…EFEE. The segment covering 133-155 has biased composition (low complexity); it reads NSPSGSCSCSASSGSSNTENSPP. Residues 190-199 show a composition bias toward basic and acidic residues; sequence EQKEGKELSK. The segment covering 204–213 has biased composition (low complexity); it reads KSAPAAAPSC. A JmjC domain is found at 379-518; that stretch reads NPSTYLKGLR…NLMEALMPAV (140 aa). Fe cation-binding residues include His419, Asp421, and His484.

This sequence belongs to the ROX family. NO66 subfamily. Fe(2+) serves as cofactor.

It is found in the nucleus. It catalyses the reaction N(6),N(6)-dimethyl-L-lysyl(36)-[histone H3] + 2 2-oxoglutarate + 2 O2 = L-lysyl(36)-[histone H3] + 2 formaldehyde + 2 succinate + 2 CO2. Oxygenase that can act as both a histone lysine demethylase and a ribosomal histidine hydroxylase. Specifically demethylates 'Lys-4' (H3K4me) and 'Lys-36' (H3K36me) of histone H3, thereby playing a central role in histone code. The polypeptide is Bifunctional lysine-specific demethylase and histidyl-hydroxylase NO66 (Drosophila grimshawi (Hawaiian fruit fly)).